Reading from the N-terminus, the 389-residue chain is MPLPTNQLRLAMVAGEPSGDLLAASLLGGLRERLPESAQYYGIGGQRMIAQGFDSHWQMDKLTVRGYVEALGQIPEILRIRGELKRQLLAERPAAFIGVDAPDFNFNVEQAARDAGIPSIHFVCPSIWAWRGGRIKKIAKSVDHMLCLFPFEPAILDKAGVASTYVGHPLADDIPLEPDTHGARIALGLPADGPVIAVLPGSRRSEIALIGPTFFAAMALMQQREPGVRFVMPAATPALRELLQPLVDAHPQLALTITDGRSQVAMTAADAILVKSGTVTLEAALLKKPMVISYKVPWLTGQIMRRQGYLPYVGLPNILAGRFVVPELLQHFATPEALADATLTQLRDDANRRTLTEVFTEMHLSLRQNTAAKAAEAVVRVLEQRKGRA.

The protein belongs to the LpxB family.

The catalysed reaction is a lipid X + a UDP-2-N,3-O-bis[(3R)-3-hydroxyacyl]-alpha-D-glucosamine = a lipid A disaccharide + UDP + H(+). The protein operates within bacterial outer membrane biogenesis; LPS lipid A biosynthesis. Condensation of UDP-2,3-diacylglucosamine and 2,3-diacylglucosamine-1-phosphate to form lipid A disaccharide, a precursor of lipid A, a phosphorylated glycolipid that anchors the lipopolysaccharide to the outer membrane of the cell. The chain is Lipid-A-disaccharide synthase from Burkholderia orbicola (strain MC0-3).